Consider the following 208-residue polypeptide: Large ribosomal subunit protein uL3 (208 aa).

The residue at position 149 (Gln149) is an N5-methylglutamine.

It belongs to the universal ribosomal protein uL3 family. Part of the 50S ribosomal subunit. Forms a cluster with proteins L14 and L19. Methylated by PrmB.

Functionally, one of the primary rRNA binding proteins, it binds directly near the 3'-end of the 23S rRNA, where it nucleates assembly of the 50S subunit. This is Large ribosomal subunit protein uL3 from Haemophilus ducreyi (strain 35000HP / ATCC 700724).